We begin with the raw amino-acid sequence, 749 residues long: MPCNCFKSNVHVQEYKDLLVFGYASTIFPNDYQSEHIAEERHTVPCLGDPENRVDRYDCRLLLPSIDVAIKRNGSPSEQCPTEAMEEDMCEEERYLDMYKDIQREQEKEEEEKRRNDQRNAIGFDYGTGKVKARESDSEDEPFEPPEGIKFPVGLELPSNMKLHHIIEKTASFIVANGTQMEIVIKAKQRNNAEQFGFLEFDHRLNPFYKYLQKLIREKKYIPDLNKRPKKLTKTSRASTSKPAISSSLAAIAAAHGSDSEDSDSDYELHPSLLSGGAKRPVTPEKPGAIGPRKKPVEPEKPPDFTLKPVGDISQRNDVYAALFKNLAHVTRQAAGVEEVKMNVEEAKKEKENDHLDDPEYREWYENFYGRPCPWIGPRPMIPATPDLEPILNSYAEHVAQRGLEAEASLAAREDLQLHFMEPKSPYYSYYHHKVRMHQWRMYQPIEQNLSPLVLNSPAPPSAVSSPGPSSLMSLNLSTPEPPLNRRQRRRLLDSSRLDESITEPGVIDPITMLQIPKSVSTPANLDILKTPISFSLRNDEPRDESSFRFDPDLDETAGPSDTTANFSDISGLFPPPTPPVIPPSTQMQVDRKEKARIFMEKLLQEKKAKKLQEEEERSKLEEETRKKAEKISESLSERKNTGRSDRREEAPKGARSLDEIINNRINSLLSESGFEPVEEMKRTDEDRERKRHRKRSRSRRRSRSCSPRDRSREHKKSRKSGRHHRSRSRSSSRDRHRRNRSRSRDRRR.

The segment at 8–124 is dry CEEERYL; it reads SNVHVQEYKD…RNDQRNAIGF (117 aa). Over residues 105 to 118 the composition is skewed to basic and acidic residues; the sequence is EQEKEEEEKRRNDQ. Residues 105–149 form a disordered region; that stretch reads EQEKEEEEKRRNDQRNAIGFDYGTGKVKARESDSEDEPFEPPEGI. The stretch at 166–209 is one SURP motif 1 repeat; sequence IIEKTASFIVANGTQMEIVIKAKQRNNAEQFGFLEFDHRLNPFY. The interval 256–310 is disordered; the sequence is HGSDSEDSDSDYELHPSLLSGGAKRPVTPEKPGAIGPRKKPVEPEKPPDFTLKPV. One copy of the SURP motif 2 repeat lies at 391 to 431; it reads ILNSYAEHVAQRGLEAEASLAAREDLQLHFMEPKSPYYSYY. Residues 458 to 478 show a composition bias toward low complexity; that stretch reads PAPPSAVSSPGPSSLMSLNLS. Disordered stretches follow at residues 458-498, 537-592, and 608-749; these read PAPP…SSRL, LRND…QVDR, and KAKK…DRRR. A compositionally biased stretch (basic and acidic residues) spans 538–552; the sequence is RNDEPRDESSFRFDP. Over residues 560 to 569 the composition is skewed to polar residues; the sequence is PSDTTANFSD. Over residues 574–583 the composition is skewed to pro residues; the sequence is FPPPTPPVIP. 2 stretches are compositionally biased toward basic and acidic residues: residues 608-659 and 679-689; these read KAKK…RSLD and EEMKRTDEDRE. Basic residues-rich tracts occupy residues 690–704 and 714–749; these read RKRHRKRSRSRRRSR and EHKKSRKSGRHHRSRSRSSSRDRHRRNRSRSRDRRR.

Its function is as follows. It is a regulator of pre-mRNA splicing (and, possibly, of other RNA processing events). It may regulate its own expression at the level of RNA processing. In Caenorhabditis elegans, this protein is Protein SWAP (swp-1).